Reading from the N-terminus, the 957-residue chain is Ribonuclease 3-like protein 3 (957 aa).

The 139-residue stretch at 4–142 (VEAVEKILNY…IAATVFIDVN (139 aa)) folds into the RNase III 1 domain. A DRBM 1 domain is found at 307–382 (NGRGELIEIC…AYHMIRALES (76 aa)). Residues 415-551 (VEAVEKILNY…VAGAVYIDVK (137 aa)) form the RNase III 2 domain. 2 DRBM domains span residues 566-645 (EPIY…KLSE) and 837-912 (DEKG…ALES).

Ribonuclease that cleaves double-stranded RNA (dsRNA). The protein is Ribonuclease 3-like protein 3 (RTL3) of Arabidopsis thaliana (Mouse-ear cress).